Reading from the N-terminus, the 235-residue chain is Segregation and condensation protein A (235 aa).

The protein belongs to the ScpA family. As to quaternary structure, component of a cohesin-like complex composed of ScpA, ScpB and the Smc homodimer, in which ScpA and ScpB bind to the head domain of Smc. The presence of the three proteins is required for the association of the complex with DNA.

It localises to the cytoplasm. Functionally, participates in chromosomal partition during cell division. May act via the formation of a condensin-like complex containing Smc and ScpB that pull DNA away from mid-cell into both cell halves. The chain is Segregation and condensation protein A from Streptococcus equi subsp. zooepidemicus (strain MGCS10565).